Reading from the N-terminus, the 315-residue chain is Initiation factor TFIIB homolog (315 aa).

Belongs to the asfivirus C315R family.

Functionally, putative initation factor. The protein is Initiation factor TFIIB homolog of Ornithodoros (relapsing fever ticks).